We begin with the raw amino-acid sequence, 432 residues long: Adenylosuccinate synthetase (432 aa).

GTP-binding positions include 13–19 (GDEGKGK) and 41–43 (GHT). Asp-14 acts as the Proton acceptor in catalysis. Mg(2+)-binding residues include Asp-14 and Gly-41. IMP-binding positions include 14–17 (DEGK), 39–42 (NAGH), Thr-130, Arg-144, Gln-225, Thr-240, and Arg-304. His-42 serves as the catalytic Proton donor. 300 to 306 (AVTGRPR) serves as a coordination point for substrate. Residues Arg-306, 332–334 (KLD), and 415–417 (STG) each bind GTP.

It belongs to the adenylosuccinate synthetase family. As to quaternary structure, homodimer. The cofactor is Mg(2+).

It is found in the cytoplasm. The enzyme catalyses IMP + L-aspartate + GTP = N(6)-(1,2-dicarboxyethyl)-AMP + GDP + phosphate + 2 H(+). The protein operates within purine metabolism; AMP biosynthesis via de novo pathway; AMP from IMP: step 1/2. In terms of biological role, plays an important role in the de novo pathway of purine nucleotide biosynthesis. Catalyzes the first committed step in the biosynthesis of AMP from IMP. This chain is Adenylosuccinate synthetase, found in Haemophilus influenzae (strain PittEE).